Reading from the N-terminus, the 64-residue chain is DNA gyrase inhibitor YacG (64 aa).

Zn(2+) contacts are provided by Cys-9, Cys-12, Cys-28, and Cys-32. The interval 45-64 is disordered; sequence KRIPSAGDLSDSDDWSEQQP. The segment covering 54–64 has biased composition (acidic residues); that stretch reads SDSDDWSEQQP.

The protein belongs to the DNA gyrase inhibitor YacG family. Interacts with GyrB. Zn(2+) is required as a cofactor.

Its function is as follows. Inhibits all the catalytic activities of DNA gyrase by preventing its interaction with DNA. Acts by binding directly to the C-terminal domain of GyrB, which probably disrupts DNA binding by the gyrase. This is DNA gyrase inhibitor YacG from Klebsiella pneumoniae subsp. pneumoniae (strain ATCC 700721 / MGH 78578).